The following is a 770-amino-acid chain: Transducin-like enhancer protein 1 (770 aa).

The segment at 1-131 (MFPQSRHPTP…IIGQQQLQAQ (131 aa)) is q domain. Disordered regions lie at residues 128-157 (LQAQHLSHGHGPPVPLTPHPSGLQPPGIPP) and 176-346 (HLAI…PAME). The interval 132–199 (HLSHGHGPPV…RHRDRESGTS (68 aa)) is GP domain. The span at 146 to 157 (HPSGLQPPGIPP) shows a compositional bias: low complexity. Basic and acidic residues-rich tracts occupy residues 178–196 (AIKDDKKHHDAERHRDRES) and 209–244 (RSTDKRRNGPEFSSDIKKRKVDDKDNYDSDGDKSDD). Residues 200–266 (NSLLVPDSLR…SPHASPTHSP (67 aa)) form a ccN domain region. Positions 225–228 (KKRK) match the Nuclear localization signal motif. S237 carries the phosphoserine; by CK2 modification. The segment covering 255 to 264 (PSSPHASPTH) has biased composition (low complexity). Phosphoserine; by CDK1 is present on residues S257, S261, and S265. The span at 265–281 (SPRENGIDKNRLLKKDA) shows a compositional bias: basic and acidic residues. Positions 267-450 (RENGIDKNRL…GGKPAYSFHV (184 aa)) are SP domain. The segment covering 282-297 (SGSPASTASSGSSSSL) has biased composition (low complexity). At S284 the chain carries Phosphoserine. Basic and acidic residues predominate over residues 298 to 308 (KSKEVSLHEKA). 6 WD repeats span residues 470 to 501 (GIPRHARQINTLNHGEVVCAVTISNPTRHVYT), 528 to 558 (NRDNYIRSCKLLPDGCTLIVGGEASTLSIWD), 572 to 602 (SSAPACYALAISPDSKVCFSCCSDGNIAVWD), 614 to 644 (GHTDGASCIDISNDGTKLWTGGLDNTVRSWD), 696 to 726 (LHESCVLSLKFAYCGKWFVSTGKDNLLNAWR), and 737 to 767 (KESSSVLSCDISVDDKYIVTGSGDKKATVYE).

This sequence belongs to the WD repeat Groucho/TLE family. As to quaternary structure, homooligomer and heterooligomer with other family members. Binds RUNX1, RUNX3, FOXA2, KDM6A, UTY, histone H3, HESX1, ESRRG and the NF-kappa-B subunit RELA. Interacts with HES1 (via WRPW motif). Binds TCF7, LEF1, TCF7L1 and TCF7L2. Interacts with SIX3. Interacts with EFNB1. Interacts with TLE4. Interacts with FOXG1/BF-1; the interaction is inhibited by TLE6/GRG6. In terms of processing, phosphorylated, probably by CDK1. The degree of phosphorylation varies throughout the cell cycle, and is highest at the G2/M transition. Becomes hyperphosphorylated in response to cell differentiation and interaction with HES1 or RUNX1. Post-translationally, ubiquitinated by XIAP/BIRC4. As to expression, highly expressed in liver and lung. Detected at slightly lower levels in heart, brain, kidney and testis. Detected in fetal and adult stomach and small intestine, in adult ileum, duodenum and colon. Expressed in bone marrow-derived macrophages. In terms of tissue distribution, most abundant at the base of the crypts of Lieberkuhn in the small intestine.

It is found in the nucleus. Its subcellular location is the cytoplasm. Its function is as follows. Transcriptional corepressor that binds to a number of transcription factors. Inhibits NF-kappa-B-regulated gene expression. Inhibits the transcriptional activation mediated by FOXA2, and by CTNNB1 and TCF family members in Wnt signaling. Enhances FOXG1/BF-1- and HES1-mediated transcriptional repression. The effects of full-length TLE family members may be modulated by association with dominant-negative AES. Unusual function as coactivator for ESRRG. The sequence is that of Transducin-like enhancer protein 1 (Tle1) from Mus musculus (Mouse).